Consider the following 156-residue polypeptide: Peptide deformylase 1 (156 aa).

Residues Cys90 and His132 each coordinate Fe cation. Glu133 is an active-site residue. His136 lines the Fe cation pocket.

It belongs to the polypeptide deformylase family. It depends on Fe(2+) as a cofactor.

It catalyses the reaction N-terminal N-formyl-L-methionyl-[peptide] + H2O = N-terminal L-methionyl-[peptide] + formate. In terms of biological role, removes the formyl group from the N-terminal Met of newly synthesized proteins. Requires at least a dipeptide for an efficient rate of reaction. N-terminal L-methionine is a prerequisite for activity but the enzyme has broad specificity at other positions. The polypeptide is Peptide deformylase 1 (Bacillus anthracis).